Consider the following 515-residue polypeptide: Bifunctional purine biosynthesis protein PurH (515 aa).

One can recognise an MGS-like domain in the interval 1 to 145 (MTKRVLISVS…KNHASVTVVV (145 aa)).

Belongs to the PurH family.

It catalyses the reaction (6R)-10-formyltetrahydrofolate + 5-amino-1-(5-phospho-beta-D-ribosyl)imidazole-4-carboxamide = 5-formamido-1-(5-phospho-D-ribosyl)imidazole-4-carboxamide + (6S)-5,6,7,8-tetrahydrofolate. The enzyme catalyses IMP + H2O = 5-formamido-1-(5-phospho-D-ribosyl)imidazole-4-carboxamide. It participates in purine metabolism; IMP biosynthesis via de novo pathway; 5-formamido-1-(5-phospho-D-ribosyl)imidazole-4-carboxamide from 5-amino-1-(5-phospho-D-ribosyl)imidazole-4-carboxamide (10-formyl THF route): step 1/1. The protein operates within purine metabolism; IMP biosynthesis via de novo pathway; IMP from 5-formamido-1-(5-phospho-D-ribosyl)imidazole-4-carboxamide: step 1/1. This is Bifunctional purine biosynthesis protein PurH from Streptococcus pneumoniae (strain P1031).